A 487-amino-acid chain; its full sequence is Dihydrofolate synthase/folylpolyglutamate synthase (487 aa).

Residue 44-46 (DPS) coordinates 7,8-dihydropteroate. 74 to 77 (GKTS) contributes to the ATP binding site. Positions 76 and 98 each coordinate Mg(2+). 150 to 153 (SKFE) is a binding site for 7,8-dihydropteroate. Residue Glu174 participates in Mg(2+) binding. 181 to 183 (WDA) is a binding site for 7,8-dihydropteroate. Residues His201 and Asp203 each coordinate Mg(2+). Residues Asn301, Arg338, and 351–354 (DAAH) contribute to the ATP site. A Mg(2+)-binding site is contributed by Asp384.

This sequence belongs to the folylpolyglutamate synthase family. As to quaternary structure, monomer. Mg(2+) serves as cofactor.

The enzyme catalyses 7,8-dihydropteroate + L-glutamate + ATP = 7,8-dihydrofolate + ADP + phosphate + H(+). It carries out the reaction (6S)-5,6,7,8-tetrahydrofolyl-(gamma-L-Glu)(n) + L-glutamate + ATP = (6S)-5,6,7,8-tetrahydrofolyl-(gamma-L-Glu)(n+1) + ADP + phosphate + H(+). Its pathway is cofactor biosynthesis; tetrahydrofolate biosynthesis; 7,8-dihydrofolate from 2-amino-4-hydroxy-6-hydroxymethyl-7,8-dihydropteridine diphosphate and 4-aminobenzoate: step 2/2. The protein operates within cofactor biosynthesis; tetrahydrofolylpolyglutamate biosynthesis. Functionally, catalyzes the addition of a glutamate residue to dihydropteroate (7,8-dihydropteroate or H2Pte) to form dihydrofolate (7,8-dihydrofolate monoglutamate or H2Pte-Glu). Also catalyzes successive additions of L-glutamate to tetrahydrofolate, leading to folylpolyglutamate derivatives. Is involved in the bioactivation of the antituberculous drug para-aminosalicylic acid (PAS). Is able to use hydroxy-dihydropteroate (H2PtePAS) as substrate, which is the product formed by the action of DHPS (FolP1) on PAS, leading to hydroxy-dihydrofolate (H2PtePAS-Glu). This compound inhibits dihydrofolate reductase DHFR (DfrA), the next enzyme in the folate pathway, and thus disrupts the folate-dependent metabolic pathways. This is Dihydrofolate synthase/folylpolyglutamate synthase from Mycobacterium tuberculosis (strain ATCC 25618 / H37Rv).